We begin with the raw amino-acid sequence, 699 residues long: Condensin complex subunit 2 (699 aa).

2 disordered regions span residues 1–35 (MSTS…SAAA) and 176–203 (ESQA…KRRK).

It belongs to the CND2 (condensin subunit 2) family. In terms of assembly, component of the condensin complex, which contains the XCAP-E/SMC2 and XCAP-C/SMC4 heterodimer, and three non SMC subunits that probably regulate the complex: XCAP-H/NCAPH, XCAP-D2/NCAPD2 and XCAP-G/NCAPG. Phosphorylated by CDK1. Its phosphorylation, as well as that of XCAP-D2 and XCAP-G subunits, activates the condensin complex and is required for chromosome condensation.

The protein localises to the nucleus. Its subcellular location is the cytoplasm. The protein resides in the chromosome. Functionally, regulatory subunit of the condensin complex, a complex required for conversion of interphase chromatin into mitotic-like condense chromosomes. The condensin complex probably introduces positive supercoils into relaxed DNA in the presence of type I topoisomerases and converts nicked DNA into positive knotted forms in the presence of type II topoisomerase. The protein is Condensin complex subunit 2 (ncaph) of Xenopus laevis (African clawed frog).